A 398-amino-acid polypeptide reads, in one-letter code: Rhizopuspepsin-4 (398 aa).

Positions 1 to 21 (MKFTLISSCVALACMALAVEA) are cleaved as a signal peptide. The propeptide at 22 to 74 (APSGKKINVPLSKNANYKPNAKRAIEKANAKYARFRSSSSSSSSSSCGSAGTE) is activation peptide. Residues 58 to 78 (SSSSSSSSSSCGSAGTESSGS) show a composition bias toward low complexity. Positions 58–83 (SSSSSSSSSSCGSAGTESSGSVPVTD) are disordered. Positions 90–394 (YYGEVTVGTP…NPQVPQVQIA (305 aa)) constitute a Peptidase A1 domain. The active site involves Asp-108. An intrachain disulfide couples Cys-121 to Cys-124. The active site involves Asp-291. Cysteines 325 and 358 form a disulfide.

Belongs to the peptidase A1 family.

It catalyses the reaction Hydrolysis of proteins with broad specificity similar to that of pepsin A, preferring hydrophobic residues at P1 and P1'. Clots milk and activates trypsinogen. Does not cleave 4-Gln-|-His-5, but does cleave 10-His-|-Leu-11 and 12-Val-|-Glu-13 in B chain of insulin.. This is Rhizopuspepsin-4 from Rhizopus niveus.